The following is a 509-amino-acid chain: MDQHPSARSCSSRGAAPSCESVSGEPPMNLYIHSTTGTRFELSLPAEETVEGLKRRLSQRLKVPKERLALLHKETRLSSGKLQDLGITDGSKLTLVPTVEAGLMSQASRPEQSVMQALESLTETQVSDFLSGRSPLTLALRVGDHMMFVQLQLAAQPSGGPQLQHRHLISRGSSEGTTGLSHGASGSASGMARVSHNPHPHHPHQHPHHPNTTLPSNPAAFPPSPSIPSIPPMYSTSASGHCSPPPQPSQLPGSFLHSQQPSSACAPSPSSPSPAASCPEASCSAKTSGNCNTPLRSRKPGAIIESFVNHAPGVFSGTFSGTLHPNCQDSTGRPRRDIGTILQILNDLLSATRHYQGMPPSLTQLRYQTQCTSPNSPAPSPPPSPPHTTGLTGLPTTVPSETQPTLHPLVQCQSQIRMCKPPGDRLRQTENRATRCKVERLQLLMQQKRLRRKARRDSRAPYHWLPNRKAGRSNSNSSMSSEGSLDLDFEDSVWKPDVKADMKSEFIMA.

A compositionally biased stretch (polar residues) spans 1-12; it reads MDQHPSARSCSS. Positions 1 to 27 are disordered; the sequence is MDQHPSARSCSSRGAAPSCESVSGEPP. The Ubiquitin-like domain maps to 28-102; sequence MNLYIHSTTG…LTLVPTVEAG (75 aa). 3 disordered regions span residues 172 to 295, 370 to 404, and 448 to 485; these read GSSE…NTPL, QCTSPNSPAPSPPPSPPHTTGLTGLPTTVPSETQP, and KRLRRKARRDSRAPYHWLPNRKAGRSNSNSSMSSEGSL. Over residues 176–190 the composition is skewed to low complexity; it reads GTTGLSHGASGSASG. The span at 196–209 shows a compositional bias: basic residues; sequence HNPHPHHPHQHPHH. The span at 220–231 shows a compositional bias: pro residues; the sequence is AFPPSPSIPSIP. A compositionally biased stretch (low complexity) spans 261 to 285; it reads PSSACAPSPSSPSPAASCPEASCSA. Polar residues predominate over residues 286-295; that stretch reads KTSGNCNTPL. Residues 376–386 show a composition bias toward pro residues; it reads SPAPSPPPSPP. Over residues 387-400 the composition is skewed to low complexity; sequence HTTGLTGLPTTVPS.

Its subcellular location is the nucleus. The protein localises to the cytoplasm. It localises to the cytosol. The protein resides in the nucleolus. Functionally, facilitates ubiquitin-independent proteasomal degradation of polycomb protein CBX4. Plays a role in inhibiting the activity of glucokinase GCK and both glucose-induced and basal insulin secretion. The chain is Midnolin (midn) from Danio rerio (Zebrafish).